Reading from the N-terminus, the 514-residue chain is Monocarboxylate transporter 10 (514 aa).

A disordered region spans residues 1–64 (MVPSQEEPAA…TGNQEPPEPP (64 aa)). Residues 1-65 (MVPSQEEPAA…GNQEPPEPPE (65 aa)) lie on the Cytoplasmic side of the membrane. A helical transmembrane segment spans residues 66–86 (GGWGWLVMLAAMWCNGSVFGI). Topologically, residues 87–113 (QNAYGVLFVSMLETFGAKDDDNMAFKA) are extracellular. A helical transmembrane segment spans residues 114-134 (AWVGSLSMGMIFFCCPIVSVF). Residues 135-143 (TDMFGCRRT) lie on the Cytoplasmic side of the membrane. Residues 144–164 (AVLGAAVGFVGLMSSSFVSSI) traverse the membrane as a helical segment. At 165–170 (EPLYFT) the chain is on the extracellular side. A helical membrane pass occupies residues 171–191 (YGVVFACGCSFAYQPSLVILG). Over 192 to 199 (HYFKKRLG) the chain is Cytoplasmic. A helical transmembrane segment spans residues 200 to 220 (LVNGIVTAGSSVFTILLPLLL). The Extracellular segment spans residues 221–227 (GNLTSTV). Residues 228–248 (GLCYTLRILCIFMFVLFLAGF) form a helical membrane-spanning segment. At 249–290 (TYRPLVPSSKEKESEDSRSSFFSRRKLSPPKKIFNFALFKET) the chain is on the cytoplasmic side. A Phosphoserine modification is found at Ser-262. The chain crosses the membrane as a helical span at residues 291–311 (AYAVWAAGIPLALFGYFVPYV). The Extracellular portion of the chain corresponds to 312–328 (HLMNHVKERFKDVNNKE). A helical membrane pass occupies residues 329–349 (VLFMCIGVTSGVGRLLFGRIA). Asp-350 is a topological domain (cytoplasmic). A helical membrane pass occupies residues 351–371 (YLPGVKKVYLQVLSFFFIGLT). At 372–395 (SMMIPLCSVFGALIALCLIMGLFD) the chain is on the extracellular side. The chain crosses the membrane as a helical span at residues 396 to 416 (GCFISIMAPIAFELVGPQDAS). Over 417–418 (QA) the chain is Cytoplasmic. A helical transmembrane segment spans residues 419-439 (IGFLLGFMSIPMTVGPPVAGL). At 440-450 (LHDKLGSYDLA) the chain is on the extracellular side. A helical transmembrane segment spans residues 451–471 (FYLAGIPPFIGGAVLCLIPWI). At 472-514 (HSKKQREISKNTGGEKMEKMLANQSSLLSSSSGIFKKESDSII) the chain is on the cytoplasmic side. A phosphoserine mark is found at Ser-497, Ser-500, Ser-502, and Ser-503.

The protein belongs to the major facilitator superfamily. Monocarboxylate porter (TC 2.A.1.13) family. Not N-glycosylated. Strongly expressed in intestine, placenta and liver. In small intestine is detected in the basolateral membrane (at protein level).

The protein localises to the cell membrane. The protein resides in the basolateral cell membrane. The enzyme catalyses L-tryptophan(in) = L-tryptophan(out). The catalysed reaction is L-tyrosine(in) = L-tyrosine(out). It carries out the reaction L-phenylalanine(in) = L-phenylalanine(out). It catalyses the reaction 3,3',5-triiodo-L-thyronine(out) = 3,3',5-triiodo-L-thyronine(in). The enzyme catalyses L-thyroxine(out) = L-thyroxine(in). In terms of biological role, sodium- and proton-independent thyroid hormones and aromatic acids transporter. Mediates both uptake and efflux of 3,5,3'-triiodothyronine (T3) and 3,5,3',5'-tetraiodothyronine (T4) with high affinity, suggesting a role in the homeostasis of thyroid hormone levels. Responsible for low affinity bidirectional transport of the aromatic amino acids, such as phenylalanine, tyrosine, tryptophan and L-3,4-dihydroxyphenylalanine (L-dopa). Plays an important role in homeostasis of aromatic amino acids. This chain is Monocarboxylate transporter 10 (Slc16a10), found in Rattus norvegicus (Rat).